Reading from the N-terminus, the 128-residue chain is Large ribosomal subunit protein eL8 (128 aa).

The protein belongs to the eukaryotic ribosomal protein eL8 family. Part of the 50S ribosomal subunit. Probably part of the RNase P complex.

Its subcellular location is the cytoplasm. Multifunctional RNA-binding protein that recognizes the K-turn motif in ribosomal RNA, the RNA component of RNase P, box H/ACA, box C/D and box C'/D' sRNAs. This chain is Large ribosomal subunit protein eL8, found in Nitrosopumilus maritimus (strain SCM1).